We begin with the raw amino-acid sequence, 424 residues long: Riboflavin biosynthesis protein RibBA (424 aa).

Positions 1-206 (MFTCEAGIAS…VDDLITYRYT (206 aa)) are DHBP synthase. D-ribulose 5-phosphate-binding positions include 32-33 (RE), D37, 145-149 (RPGHT), and E169. E33 contributes to the Mg(2+) binding site. H148 contacts Mg(2+). The GTP cyclohydrolase II stretch occupies residues 207–424 (YDSLVTKISS…YETVERMSCR (218 aa)). Residue 257–261 (RVHSE) coordinates GTP. Residues C262, C273, and C275 each contribute to the Zn(2+) site. GTP is bound by residues Q278, 301–303 (EGR), and T323. The active-site Proton acceptor; for GTP cyclohydrolase activity is the D335. R337 (nucleophile; for GTP cyclohydrolase activity) is an active-site residue. GTP contacts are provided by T358 and K363.

This sequence in the N-terminal section; belongs to the DHBP synthase family. The protein in the C-terminal section; belongs to the GTP cyclohydrolase II family. The cofactor is Mg(2+). It depends on Mn(2+) as a cofactor. Zn(2+) is required as a cofactor.

The enzyme catalyses D-ribulose 5-phosphate = (2S)-2-hydroxy-3-oxobutyl phosphate + formate + H(+). It catalyses the reaction GTP + 4 H2O = 2,5-diamino-6-hydroxy-4-(5-phosphoribosylamino)-pyrimidine + formate + 2 phosphate + 3 H(+). It functions in the pathway cofactor biosynthesis; riboflavin biosynthesis; 2-hydroxy-3-oxobutyl phosphate from D-ribulose 5-phosphate: step 1/1. It participates in cofactor biosynthesis; riboflavin biosynthesis; 5-amino-6-(D-ribitylamino)uracil from GTP: step 1/4. Catalyzes the conversion of D-ribulose 5-phosphate to formate and 3,4-dihydroxy-2-butanone 4-phosphate. In terms of biological role, catalyzes the conversion of GTP to 2,5-diamino-6-ribosylamino-4(3H)-pyrimidinone 5'-phosphate (DARP), formate and pyrophosphate. This chain is Riboflavin biosynthesis protein RibBA, found in Chlamydia trachomatis serovar D (strain ATCC VR-885 / DSM 19411 / UW-3/Cx).